The primary structure comprises 71 residues: Large ribosomal subunit protein bL31 (71 aa).

Belongs to the bacterial ribosomal protein bL31 family. Type A subfamily. In terms of assembly, part of the 50S ribosomal subunit.

Functionally, binds the 23S rRNA. This Mycoplasmopsis synoviae (strain 53) (Mycoplasma synoviae) protein is Large ribosomal subunit protein bL31 (rpmE).